A 139-amino-acid chain; its full sequence is Protein GOS9 (139 aa).

Residues 5-139 (LVKIGTWGGN…VDSIGVYVHI (135 aa)) form the Jacalin-type lectin domain.

Expressed mainly in roots.

This is Protein GOS9 (GOS9) from Oryza sativa subsp. indica (Rice).